Here is a 352-residue protein sequence, read N- to C-terminus: Carbohydrate sulfotransferase 11 (352 aa).

Over M1 to R16 the chain is Cytoplasmic. The helical; Signal-anchor for type II membrane protein transmembrane segment at M17–L37 threads the bilayer. Topologically, residues H38–D352 are lumenal. Residues P124–N130 and R186–S194 contribute to the 3'-phosphoadenylyl sulfate site. N-linked (GlcNAc...) asparagine glycans are attached at residues N205, N223, N321, and N342.

Belongs to the sulfotransferase 2 family. N-glycosylated; required for activity and stability.

The protein resides in the golgi apparatus membrane. It carries out the reaction chondroitin beta-D-glucuronate + n 3'-phosphoadenylyl sulfate = chondroitin 4'-sulfate + n adenosine 3',5'-bisphosphate + n H(+). Catalyzes the transfer of sulfate to position 4 of the N-acetylgalactosamine (GalNAc) residue of chondroitin. Chondroitin sulfate constitutes the predominant proteoglycan present in cartilage and is distributed on the surfaces of many cells and extracellular matrices. Can also sulfate Gal residues in desulfated dermatan sulfate. Preferentially sulfates in GlcA-&gt;GalNAc unit than in IdoA-&gt;GalNAc unit. Does not form 4, 6-di-O-sulfated GalNAc when chondroitin sulfate C is used as an acceptor. This is Carbohydrate sulfotransferase 11 (Chst11) from Rattus norvegicus (Rat).